The sequence spans 447 residues: Cysteine--tRNA ligase (447 aa).

Residue cysteine 28 coordinates Zn(2+). The short motif at 30–40 is the 'HIGH' region element; the sequence is PTVYNYIHIGN. Residues cysteine 211, histidine 236, and glutamate 240 each contribute to the Zn(2+) site. A 'KMSKS' region motif is present at residues 268–272; that stretch reads KMSKS. Lysine 271 contacts ATP.

The protein belongs to the class-I aminoacyl-tRNA synthetase family. Monomer. Requires Zn(2+) as cofactor.

The protein localises to the cytoplasm. The enzyme catalyses tRNA(Cys) + L-cysteine + ATP = L-cysteinyl-tRNA(Cys) + AMP + diphosphate. In Streptococcus pyogenes serotype M3 (strain ATCC BAA-595 / MGAS315), this protein is Cysteine--tRNA ligase.